The chain runs to 1083 residues: Voltage-gated inwardly rectifying potassium channel KCNH3 (1083 aa).

Topologically, residues M1–D228 are cytoplasmic. One can recognise a PAS domain in the interval I18–H90. The 53-residue stretch at F93 to W145 folds into the PAC domain. Residues K137 to G150 are compositionally biased toward basic and acidic residues. The tract at residues K137–R157 is disordered. The chain crosses the membrane as a helical span at residues G229–S249. The Extracellular portion of the chain corresponds to T250–G259. The helical transmembrane segment at P260 to F280 threads the bilayer. Residues R281–Y302 are Cytoplasmic-facing. A helical transmembrane segment spans residues V303 to F323. The Extracellular segment spans residues K324–A331. The chain crosses the membrane as a helical; Voltage-sensor span at residues H332–Y352. At S353 to T361 the chain is on the cytoplasmic side. Residues L362 to G382 traverse the membrane as a helical segment. Topologically, residues Q383 to I453 are extracellular. Residues N421, N428, and N436 are each glycosylated (N-linked (GlcNAc...) asparagine). An intramembrane region (pore-forming) is located at residues T454 to N474. The Selectivity filter signature appears at S465–N470. The Extracellular portion of the chain corresponds to T475–K479. The chain crosses the membrane as a helical span at residues I480–V500. At T501–V1083 the chain is on the cytoplasmic side. L582–R697 is an a nucleoside 3',5'-cyclic phosphate binding site. 3 disordered regions span residues E729–P810, C832–R873, and M972–W1055. Positions T773–P785 are enriched in basic residues. Over residues G844–G861 the composition is skewed to low complexity.

The protein belongs to the potassium channel family. H (Eag) (TC 1.A.1.20) subfamily. Kv12.2/KCNH3 sub-subfamily. As to quaternary structure, the potassium channel is probably composed of a homo- or heterotetrameric complex of pore-forming alpha subunits that can associate with modulating beta subunits. Interacts with KCNE1 and KCNE3; these interactions regulate KCNH3 trafficking to the plasma membrane and its subsequent voltage-gated potassium channel activity. Post-translationally, N-glycosylated. N-glycosylation mediates traffick to the cell membrane but is not necessary for voltage-gated potassium channel activity. In terms of tissue distribution, detected only in brain, in particular in the telencephalon. Detected in the cerebral cortex, occipital pole, frontal and temporal lobe, putamen, amygdala, hippocampus and caudate nucleus.

It is found in the cell membrane. The catalysed reaction is K(+)(in) = K(+)(out). Its function is as follows. Pore-forming (alpha) subunit of a voltage-gated inwardly rectifying potassium channel. Charactherized by a fast rate of activation during depolarization followed by a rapid inactivation at much more depolarized value causing inward rectification due to a C-type inactivation mechanism. Exhibits a rapid recovery from inactivation. This is Voltage-gated inwardly rectifying potassium channel KCNH3 from Homo sapiens (Human).